The sequence spans 338 residues: Putative transposase for insertion sequence element IS4SA (338 aa).

Belongs to the transposase 11 family.

This is Putative transposase for insertion sequence element IS4SA from Synechocystis sp. (strain ATCC 27184 / PCC 6803 / Kazusa).